We begin with the raw amino-acid sequence, 296 residues long: MTKEIPKINNEYLKEKRKKQRIQQRRVQRMIVGILVVIVLLILVYMFTPISHIKSADIKGNHYVSKQDILKELDIQNHPRIYAYSSDDAETRLKQNELIDEVTIEKGLFNPIEVNVKEHTIIAITTEKSRVVPMIENGKVLKDYKQEVPNEAPYIEGFKGAEKRNLIDALQKMDRTTRAQISEIVSAPQKDQPHLIKLFMRDGIEVVGNTNTIAEKLKYYPSMSQALEKDETGKLKKSGFIDLSVGATFIPYDNVNNGQTSSASAKEVQSGTASEDKAKDDLQKALNKIKDEESSE.

Residues 1–29 are Cytoplasmic-facing; that stretch reads MTKEIPKINNEYLKEKRKKQRIQQRRVQR. The helical transmembrane segment at 30-50 threads the bilayer; that stretch reads MIVGILVVIVLLILVYMFTPI. Residues 51–119 form the POTRA domain; sequence SHIKSADIKG…NPIEVNVKEH (69 aa). The Extracellular segment spans residues 51–296; the sequence is SHIKSADIKG…NKIKDEESSE (246 aa). Residues 256-273 are compositionally biased toward polar residues; it reads NNGQTSSASAKEVQSGTA. A disordered region spans residues 256-296; that stretch reads NNGQTSSASAKEVQSGTASEDKAKDDLQKALNKIKDEESSE. The segment covering 274 to 296 has biased composition (basic and acidic residues); it reads SEDKAKDDLQKALNKIKDEESSE.

It belongs to the FtsQ/DivIB family. DivIB subfamily.

Its subcellular location is the cell membrane. Functionally, cell division protein that may be involved in stabilizing or promoting the assembly of the division complex. In Staphylococcus pseudintermedius (strain HKU10-03), this protein is Cell division protein DivIB.